We begin with the raw amino-acid sequence, 1388 residues long: Dicer-like protein 2 (1388 aa).

Residues 23 to 203 (MLEASMKENI…LLTVESNLDA (181 aa)) enclose the Helicase ATP-binding domain. 36–43 (MDTGSGKT) lines the ATP pocket. The DEAH box motif lies at 144-147 (DEAH). The 167-residue stretch at 371–537 (SLLNFLDSLD…DDERQLQSVS (167 aa)) folds into the Helicase C-terminal domain. Residues 564–658 (AMAHLHHFCA…LPLTKRPELK (95 aa)) enclose the Dicer dsRNA-binding fold domain. RNase III domains are found at residues 919-1059 (ATRL…MDGG) and 1098-1281 (NERL…VDSG). Positions 1137, 1267, and 1270 each coordinate Mg(2+).

This sequence belongs to the helicase family. Dicer subfamily. The cofactor is Mg(2+). Requires Mn(2+) as cofactor.

Its function is as follows. Dicer-like endonuclease involved in cleaving double-stranded RNA in the RNA interference (RNAi) pathway. Produces 21 to 25 bp dsRNAs (siRNAs) which target the selective destruction of homologous RNAs leading to sequence-specific suppression of gene expression, called post-transcriptional gene silencing (PTGS). Part of a broad host defense response against viral infection and transposons. The polypeptide is Dicer-like protein 2 (dcl2) (Neosartorya fischeri (strain ATCC 1020 / DSM 3700 / CBS 544.65 / FGSC A1164 / JCM 1740 / NRRL 181 / WB 181) (Aspergillus fischerianus)).